A 353-amino-acid chain; its full sequence is Photosystem II protein D1 (353 aa).

An N-acetylthreonine modification is found at T2. T2 is modified (phosphothreonine). Transmembrane regions (helical) follow at residues 29-46, 118-133, and 142-156; these read YIGWFGVLMIPTLLTATS, HFLLGVACYMGREWEL, and WIAVAYSAPVAAATA. A chlorophyll a-binding site is contributed by H118. Y126 contributes to the pheophytin a binding site. Positions 170 and 189 each coordinate [CaMn4O5] cluster. Residues 197 to 218 traverse the membrane as a helical segment; it reads FHMLGVAGVFGGSLFSAMHGSL. H198 contributes to the chlorophyll a binding site. A quinone is bound by residues H215 and 264 to 265; that span reads SF. H215 provides a ligand contact to Fe cation. H272 is a Fe cation binding site. The chain crosses the membrane as a helical span at residues 274–288; that stretch reads FLAAWPVVGIWFTAL. Residues H332, E333, D342, and A344 each contribute to the [CaMn4O5] cluster site. Residues 345–353 constitute a propeptide that is removed on maturation; that stretch reads SIEAPLVNG.

The protein belongs to the reaction center PufL/M/PsbA/D family. PSII is composed of 1 copy each of membrane proteins PsbA, PsbB, PsbC, PsbD, PsbE, PsbF, PsbH, PsbI, PsbJ, PsbK, PsbL, PsbM, PsbT, PsbX, PsbY, PsbZ, Psb30/Ycf12, at least 3 peripheral proteins of the oxygen-evolving complex and a large number of cofactors. It forms dimeric complexes. The D1/D2 heterodimer binds P680, chlorophylls that are the primary electron donor of PSII, and subsequent electron acceptors. It shares a non-heme iron and each subunit binds pheophytin, quinone, additional chlorophylls, carotenoids and lipids. D1 provides most of the ligands for the Mn4-Ca-O5 cluster of the oxygen-evolving complex (OEC). There is also a Cl(-1) ion associated with D1 and D2, which is required for oxygen evolution. The PSII complex binds additional chlorophylls, carotenoids and specific lipids. is required as a cofactor. Tyr-161 forms a radical intermediate that is referred to as redox-active TyrZ, YZ or Y-Z. Post-translationally, C-terminally processed by CTPA; processing is essential to allow assembly of the oxygen-evolving complex and thus photosynthetic growth.

The protein localises to the plastid. The protein resides in the chloroplast thylakoid membrane. It carries out the reaction 2 a plastoquinone + 4 hnu + 2 H2O = 2 a plastoquinol + O2. Photosystem II (PSII) is a light-driven water:plastoquinone oxidoreductase that uses light energy to abstract electrons from H(2)O, generating O(2) and a proton gradient subsequently used for ATP formation. It consists of a core antenna complex that captures photons, and an electron transfer chain that converts photonic excitation into a charge separation. The D1/D2 (PsbA/PsbD) reaction center heterodimer binds P680, the primary electron donor of PSII as well as several subsequent electron acceptors. This chain is Photosystem II protein D1, found in Psilotum nudum (Whisk fern).